Reading from the N-terminus, the 172-residue chain is Interferon tau-2 (172 aa).

Cystine bridges form between cysteine 1-cysteine 99 and cysteine 29-cysteine 139. N-linked (GlcNAc...) asparagine glycosylation is present at asparagine 78.

This sequence belongs to the alpha/beta interferon family. IFN-alphaII subfamily. In terms of tissue distribution, constitutively and exclusively expressed in the mononuclear cells of the extraembryonic trophectoderm.

It localises to the secreted. Paracrine hormone primarily responsible for maternal recognition of pregnancy. Interacts with endometrial receptors, probably type I interferon receptors, and blocks estrogen receptor expression, preventing the estrogen-induced increase in oxytocin receptor expression in the endometrium. This results in the suppression of the pulsatile endometrial release of the luteolytic hormone prostaglandin F2-alpha, hindering the regression of the corpus luteum (luteolysis) and therefore a return to ovarian cyclicity. This, and a possible direct effect of IFN-tau on prostaglandin synthesis, leads in turn to continued ovarian progesterone secretion, which stimulates the secretion by the endometrium of the nutrients required for the growth of the conceptus. In summary, displays particularly high antiviral and antiproliferative potency concurrently with particular weak cytotoxicity, high antiluteolytic activity and immunomodulatory properties. In contrast with other IFNs, IFN-tau is not virally inducible. The sequence is that of Interferon tau-2 (IFNT2) from Bos taurus (Bovine).